Reading from the N-terminus, the 421-residue chain is Serine hydroxymethyltransferase (421 aa).

(6S)-5,6,7,8-tetrahydrofolate is bound by residues L123 and 127-129; that span reads GHL. K232 bears the N6-(pyridoxal phosphate)lysine mark.

The protein belongs to the SHMT family. Homodimer. Pyridoxal 5'-phosphate serves as cofactor.

The protein resides in the cytoplasm. The enzyme catalyses (6R)-5,10-methylene-5,6,7,8-tetrahydrofolate + glycine + H2O = (6S)-5,6,7,8-tetrahydrofolate + L-serine. The protein operates within one-carbon metabolism; tetrahydrofolate interconversion. It functions in the pathway amino-acid biosynthesis; glycine biosynthesis; glycine from L-serine: step 1/1. In terms of biological role, catalyzes the reversible interconversion of serine and glycine with tetrahydrofolate (THF) serving as the one-carbon carrier. This reaction serves as the major source of one-carbon groups required for the biosynthesis of purines, thymidylate, methionine, and other important biomolecules. Also exhibits THF-independent aldolase activity toward beta-hydroxyamino acids, producing glycine and aldehydes, via a retro-aldol mechanism. This chain is Serine hydroxymethyltransferase, found in Ehrlichia ruminantium (strain Gardel).